The following is a 146-amino-acid chain: Holo-[acyl-carrier-protein] synthase (146 aa).

Mg(2+) is bound by residues Asp9 and Glu63.

It belongs to the P-Pant transferase superfamily. AcpS family. Mg(2+) serves as cofactor.

Its subcellular location is the cytoplasm. It catalyses the reaction apo-[ACP] + CoA = holo-[ACP] + adenosine 3',5'-bisphosphate + H(+). Functionally, transfers the 4'-phosphopantetheine moiety from coenzyme A to a Ser of acyl-carrier-protein. The sequence is that of Holo-[acyl-carrier-protein] synthase from Burkholderia orbicola (strain MC0-3).